Reading from the N-terminus, the 245-residue chain is Probable transcriptional regulatory protein SUN_1622 (245 aa).

This sequence belongs to the TACO1 family.

It is found in the cytoplasm. This Sulfurovum sp. (strain NBC37-1) protein is Probable transcriptional regulatory protein SUN_1622.